Here is a 2510-residue protein sequence, read N- to C-terminus: Highly reducing polyketide synthase g433 (2510 aa).

The segment at 1–54 (MAPGRTDVTVAENGNGLHTAHNGVSNGTSNGTNGTSHTSNGTNSSAKTTSNGVH) is disordered. Positions 22–45 (NGVSNGTSNGTNGTSHTSNGTNSS) are enriched in low complexity. The 420-residue stretch at 58–477 (DIPIAIVGMG…GANAHAVIDS (420 aa)) folds into the Ketosynthase family 3 (KS3) domain. Catalysis depends on for beta-ketoacyl synthase activity residues cysteine 229, histidine 365, and histidine 400. A malonyl-CoA:ACP transacylase (MAT) domain region spans residues 574–880 (FVFTGQGAQW…VPTLVRGQND (307 aa)). Residues 942–1070 (HDLLGCQVFE…GQVKAGRADS (129 aa)) are N-terminal hotdog fold. The segment at 942-1226 (HDLLGCQVFE…NLRLAPAADD (285 aa)) is dehydratase (DH) domain. The PKS/mFAS DH domain maps to 942–1229 (HDLLGCQVFE…LAPAADDTGG (288 aa)). Histidine 974 functions as the Proton acceptor; for dehydratase activity in the catalytic mechanism. Positions 1083 to 1229 (PRKVSSTRWY…LAPAADDTGG (147 aa)) are C-terminal hotdog fold. Aspartate 1144 acts as the Proton donor; for dehydratase activity in catalysis. Residues 1395 to 1574 (DFLGLVSHDK…FDGAEAVIYD (180 aa)) form a methyltransferase (CMet) domain region. Positions 1787–2097 (GSLKTLRWVQ…KGQHMGKLVI (311 aa)) are enoyl reductase (ER) (ER) domain. Positions 2122-2296 (SYLLVGGLGG…ASVLDISIIE (175 aa)) are ketoreductase (KR) domain. A Carrier domain is found at 2419-2496 (SSVSFLANEI…KLGEAAAEGL (78 aa)). O-(pantetheine 4'-phosphoryl)serine is present on serine 2456.

It participates in mycotoxin biosynthesis. Functionally, highly reducing polyketide synthase; part of the gene cluster that mediates the biosynthesis of 1233A, a natural compound known as an inhibitor of HMG-CoA synthase in the mevalonate pathway and with antibacterial and antifungal activities. The highly reducing polyketide synthase g433 gene is responsible for the 1233A backbone biosynthesis and the cytochrome P450 monooxygenase g430 catalyzes oxidation of the backbone. This is Highly reducing polyketide synthase g433 from Fusarium sp.